The chain runs to 572 residues: Dityrosine transporter 1 (572 aa).

Disordered stretches follow at residues 1–28 and 49–95; these read MGSE…STFH and RANI…SPDT. The Cytoplasmic portion of the chain corresponds to 1 to 110; it reads MGSEPFQKKN…YTYFSKDQRL (110 aa). The segment covering 13-28 has biased composition (polar residues); it reads LQINSQESGTTRSTFH. Residues 50–62 are compositionally biased toward basic and acidic residues; it reads ANIDHDVFHEHPD. Polar residues predominate over residues 83–95; the sequence is SSNSQSRDPSPDT. The chain crosses the membrane as a helical span at residues 111 to 131; it reads IIFGIIIFIGFLGPMSGNIYI. The Extracellular segment spans residues 132-149; that stretch reads PALPLLQREYDVSATTIN. The helical transmembrane segment at 150–170 threads the bilayer; that stretch reads ATVSVFMAVFSVGPLFWGALA. Over 171-184 the chain is Cytoplasmic; that stretch reads DFGGRKFLYMVSLS. Residues 185–205 traverse the membrane as a helical segment; sequence LMLIVNILLAAVPVNIAALFV. Topologically, residues 206-207 are extracellular; it reads LR. A helical transmembrane segment spans residues 208–228; that stretch reads IFQAFASSSVISLGAGTVTDV. The Cytoplasmic segment spans residues 229–240; that stretch reads VPPKHRGKAIAY. The helical transmembrane segment at 241–261 threads the bilayer; the sequence is FMMGPNMGPIIAPIVAGLILM. The Extracellular portion of the chain corresponds to 262-267; the sequence is KGNYWR. Residues 268–288 traverse the membrane as a helical segment; it reads WLFGFTSIMTGIALILVTALL. Over 289 to 366 the chain is Cytoplasmic; it reads PETLRCIVGN…TLYWKMIKCP (78 aa). The chain crosses the membrane as a helical span at residues 367 to 387; that stretch reads PIIITSVSTALLFSSYYAFSV. The Extracellular segment spans residues 388–398; sequence TFSYYLEHDYR. A helical membrane pass occupies residues 399–419; that stretch reads FTMLEIGAAYVCPGVAMLLGS. Topologically, residues 420–446 are cytoplasmic; that stretch reads QSGGHLSDYLRSRWIKSHPKKKFPAEF. Residues 447 to 469 traverse the membrane as a helical segment; sequence RLLLNLIGILLTICGTIGYGWAI. Over 470–472 the chain is Extracellular; it reads FFH. A helical transmembrane segment spans residues 473 to 493; the sequence is YHFVVLLVFSALTAFGMTWCS. The Cytoplasmic portion of the chain corresponds to 494–520; it reads NTSMTYLTELFPKRAAGTVAVSSFFRN. The chain crosses the membrane as a helical span at residues 521–541; the sequence is VGAAISSAIILQLCNAMGIGW. Position 542 (C542) is a topological domain, extracellular. The helical transmembrane segment at 543–563 threads the bilayer; that stretch reads FTGLGLCSSISLIGILYLLIF. A required for the localization to the prospore membrane region spans residues 548-572; that stretch reads LCSSISLIGILYLLIFQRKYTAKEF. The Cytoplasmic portion of the chain corresponds to 564-572; that stretch reads QRKYTAKEF.

The protein belongs to the major facilitator superfamily. CAR1 family. In terms of processing, phosphorylated.

The protein resides in the prospore membrane. Its function is as follows. Prospore-specific dityrosine transporter responsible for translocation of dityrosine through the prospore membrane and required for the formation of the outermost layer of the spore. The protein is Dityrosine transporter 1 (DTR1) of Saccharomyces cerevisiae (strain ATCC 204508 / S288c) (Baker's yeast).